Consider the following 73-residue polypeptide: Neurogranin (73 aa).

The IQ domain maps to 26 to 55 (ANAAAAKIQASFRGHMTRKKIKGGEIDRKT). Ser-36 carries the phosphoserine; by PKC modification. Residues 47–59 (KGGEIDRKTKDAE) show a composition bias toward basic and acidic residues. A disordered region spans residues 47 to 73 (KGGEIDRKTKDAECANSTRGGDLRNGD).

The protein belongs to the neurogranin family.

Its function is as follows. Acts as a 'third messenger' substrate of protein kinase C-mediated molecular cascades during synaptic development and remodeling. Binds to calmodulin in the absence of calcium. The polypeptide is Neurogranin (NRGN) (Serinus canaria (Island canary)).